Reading from the N-terminus, the 351-residue chain is Adenine deaminase (351 aa).

Residues His-20, His-22, and His-200 each coordinate Zn(2+). Glu-203 (proton donor) is an active-site residue. Zn(2+) is bound at residue Asp-281. Residue Asp-282 participates in substrate binding.

Belongs to the metallo-dependent hydrolases superfamily. Adenosine and AMP deaminases family. Adenine deaminase type 2 subfamily. Requires Zn(2+) as cofactor.

It carries out the reaction adenine + H2O + H(+) = hypoxanthine + NH4(+). Catalyzes the hydrolytic deamination of adenine to hypoxanthine. Plays an important role in the purine salvage pathway and in nitrogen catabolism. The sequence is that of Adenine deaminase from Cupriavidus pinatubonensis (strain JMP 134 / LMG 1197) (Cupriavidus necator (strain JMP 134)).